Consider the following 383-residue polypeptide: Dihydroorotase (383 aa).

Residues His-47 and His-49 each contribute to the Zn(2+) site. Residues 49–51 (HFR) and Asn-81 contribute to the substrate site. Zn(2+) is bound by residues Lys-128, His-159, His-198, and Asp-264. At Lys-128 the chain carries N6-carboxylysine. Asp-264 is a catalytic residue. Residues His-268 and 280 to 281 (PG) each bind substrate.

Belongs to the metallo-dependent hydrolases superfamily. DHOase family. Class I DHOase subfamily. The cofactor is Zn(2+).

The enzyme catalyses (S)-dihydroorotate + H2O = N-carbamoyl-L-aspartate + H(+). The protein operates within pyrimidine metabolism; UMP biosynthesis via de novo pathway; (S)-dihydroorotate from bicarbonate: step 3/3. In terms of biological role, catalyzes the reversible cyclization of carbamoyl aspartate to dihydroorotate. This Pyrobaculum aerophilum (strain ATCC 51768 / DSM 7523 / JCM 9630 / CIP 104966 / NBRC 100827 / IM2) protein is Dihydroorotase.